A 438-amino-acid polypeptide reads, in one-letter code: Putative phospholipase A2 (438 aa).

Serine 257 functions as the Nucleophile in the catalytic mechanism. Residues aspartate 291 and histidine 368 each act as charge relay system in the active site.

This sequence belongs to the serine esterase family.

Its subcellular location is the cytoplasm. The protein resides in the nucleus. It carries out the reaction a 1-O-alkyl-2-acetyl-sn-glycero-3-phosphocholine + H2O = a 1-O-alkyl-sn-glycero-3-phosphocholine + acetate + H(+). The polypeptide is Putative phospholipase A2 (Schizosaccharomyces pombe (strain 972 / ATCC 24843) (Fission yeast)).